The primary structure comprises 298 residues: MRDRTHELRQGDNISDDEDEVRVALVVHSGAARLGSPDDEFFQKVQTIRQTMAKLESKVRELEKQQVTILATPLPEESMKQGLQNLREEIKQLGREVRAQLKAIEPQKEEADENYNSVNTRMKKTQHGVLSQQFVELINKCNSMQSEYREKNVERIRRQLKITNAGMVSDEELEQMLDSGQSEVFVSNILKDTQVTRQALNEISARHSEIQQLERSIRELHEIFTFLATEVEMQGEMINRIEKNILSSADYVERGQEHVKIALENQKKARKKKVMIAICVSVTVLILAVIIGITITVG.

The Cytoplasmic portion of the chain corresponds to 1-274 (MRDRTHELRQ…NQKKARKKKV (274 aa)). Phosphoserine is present on residues S15, S29, S36, S117, S208, and S248. Residues 38–163 (DDEFFQKVQT…ERIRRQLKIT (126 aa)) are a coiled coil. Positions 154–298 (ERIRRQLKIT…VIIGITITVG (145 aa)) are interaction with CENPF. In terms of domain architecture, t-SNARE coiled-coil homology spans 200–262 (LNEISARHSE…ERGQEHVKIA (63 aa)). A helical; Anchor for type IV membrane protein membrane pass occupies residues 275–295 (MIAICVSVTVLILAVIIGITI). Topologically, residues 296-298 (TVG) are extracellular.

Belongs to the syntaxin family. Interacts with STXBP6. Component of the SNARE complex composed of STX4, SNAP23 and VAMP7 that interacts with SYT7 during lysosomal exocytosis. Found in a complex with VAMP8 and SNAP23. Detected in a complex with SNAP23 and STXBP4. Interacts with VAMP2. Interacts with SNAP23 and SNAPIN. Interacts with LLGL1. Interacts (via C-terminus) with CENPF. Interacts with DOC2B. Interacts with STXBP3; excludes interaction with DOC2B and SNAP25. Interacts with STXBP4; excludes interaction with VAMP2. Interacts with STXBP5L. Expressed in the outer and inner hair cells of the cochlea.

The protein resides in the cell membrane. It localises to the cell projection. The protein localises to the neuron projection. Its subcellular location is the stereocilium. Its function is as follows. Plasma membrane t-SNARE that mediates docking of transport vesicles. Necessary for the translocation of SLC2A4 from intracellular vesicles to the plasma membrane. In neurons, recruited at neurite tips to membrane domains rich in the phospholipid 1-oleoyl-2-palmitoyl-PC (OPPC) which promotes neurite tip surface expression of the dopamine transporter SLC6A3/DAT by facilitating fusion of SLC6A3-containing transport vesicles with the plasma membrane. Together with STXB3 and VAMP2, may also play a role in docking/fusion of intracellular GLUT4-containing vesicles with the cell surface in adipocytes and in docking of synaptic vesicles at presynaptic active zones. Required for normal hearing. In Mus musculus (Mouse), this protein is Syntaxin-4 (Stx4).